The primary structure comprises 656 residues: DNA ligase (656 aa).

NAD(+) is bound by residues 32-36 (DAIYD) and 81-82 (SL). Catalysis depends on Lys-112, which acts as the N6-AMP-lysine intermediate. Residues Arg-133, Glu-167, and Lys-306 each coordinate NAD(+). Positions 400, 403, 416, and 421 each coordinate Zn(2+). Positions 577–656 (KSSSVFNNKT…ELLKRLKELD (80 aa)) constitute a BRCT domain.

Belongs to the NAD-dependent DNA ligase family. LigA subfamily. Mg(2+) is required as a cofactor. Mn(2+) serves as cofactor.

The enzyme catalyses NAD(+) + (deoxyribonucleotide)n-3'-hydroxyl + 5'-phospho-(deoxyribonucleotide)m = (deoxyribonucleotide)n+m + AMP + beta-nicotinamide D-nucleotide.. Its function is as follows. DNA ligase that catalyzes the formation of phosphodiester linkages between 5'-phosphoryl and 3'-hydroxyl groups in double-stranded DNA using NAD as a coenzyme and as the energy source for the reaction. It is essential for DNA replication and repair of damaged DNA. This is DNA ligase from Helicobacter pylori (strain ATCC 700392 / 26695) (Campylobacter pylori).